Reading from the N-terminus, the 650-residue chain is Acetyl-coenzyme A synthetase (650 aa).

Residues 191–194 (RGGR), Thr-311, and Asn-335 contribute to the CoA site. ATP is bound by residues 387 to 389 (GEP), 411 to 416 (DTWWQT), Asp-500, and Arg-515. Ser-523 provides a ligand contact to CoA. ATP is bound at residue Arg-526. 3 residues coordinate Mg(2+): Val-537, His-539, and Val-542. Arg-584 is a binding site for CoA. Lys-609 carries the N6-acetyllysine modification.

The protein belongs to the ATP-dependent AMP-binding enzyme family. It depends on Mg(2+) as a cofactor. In terms of processing, acetylated. Deacetylation by the SIR2-homolog deacetylase activates the enzyme.

It carries out the reaction acetate + ATP + CoA = acetyl-CoA + AMP + diphosphate. Its function is as follows. Catalyzes the conversion of acetate into acetyl-CoA (AcCoA), an essential intermediate at the junction of anabolic and catabolic pathways. AcsA undergoes a two-step reaction. In the first half reaction, AcsA combines acetate with ATP to form acetyl-adenylate (AcAMP) intermediate. In the second half reaction, it can then transfer the acetyl group from AcAMP to the sulfhydryl group of CoA, forming the product AcCoA. This Shewanella baltica (strain OS195) protein is Acetyl-coenzyme A synthetase.